The chain runs to 327 residues: Melanoma-associated antigen B18 (327 aa).

Residues 1–19 (MPRGQKSKLRAREKRRQAR) are compositionally biased toward basic residues. Positions 1-85 (MPRGQKSKLR…SSDDSEDTED (85 aa)) are disordered. Polar residues predominate over residues 46–70 (MPTSPNMPMGEQSTFSHSYTSTSDQ). In terms of domain architecture, MAGE spans 91–289 (INHKVVLLVQ…DSFPTLYEAA (199 aa)).

As to quaternary structure, interacts with LNX1. As to expression, expressed in testis, stomach, large intestine, small intestine, spleen, lymph node, bone marrow lymphocytes and blood T-lymphocytes. Not detected in brain, heart, lung, liver or kidney (at protein level).

Its subcellular location is the cytoplasm. Its function is as follows. May enhance ubiquitin ligase activity of RING-type zinc finger-containing E3 ubiquitin-protein ligases. Proposed to act through recruitment and/or stabilization of the Ubl-conjugating enzyme (E2) at the E3:substrate complex. The protein is Melanoma-associated antigen B18 of Mus musculus (Mouse).